A 1076-amino-acid chain; its full sequence is Bifunctional glutamine synthetase adenylyltransferase/adenylyl-removing enzyme (1076 aa).

Residues 1 to 521 (MESSMFKPSS…LHLDIYYRPM (521 aa)) form an adenylyl removase region. Residues 524–1076 (VNAQMENDQI…LERNRRRAQR (553 aa)) form an adenylyl transferase region. Residues 1041–1056 (ATATASAATPQPQTAP) are compositionally biased toward low complexity. The disordered stretch occupies residues 1041–1076 (ATATASAATPQPQTAPRPRMHVIAPRLERNRRRAQR).

This sequence belongs to the GlnE family. Mg(2+) serves as cofactor.

It carries out the reaction [glutamine synthetase]-O(4)-(5'-adenylyl)-L-tyrosine + phosphate = [glutamine synthetase]-L-tyrosine + ADP. The catalysed reaction is [glutamine synthetase]-L-tyrosine + ATP = [glutamine synthetase]-O(4)-(5'-adenylyl)-L-tyrosine + diphosphate. Functionally, involved in the regulation of glutamine synthetase GlnA, a key enzyme in the process to assimilate ammonia. When cellular nitrogen levels are high, the C-terminal adenylyl transferase (AT) inactivates GlnA by covalent transfer of an adenylyl group from ATP to specific tyrosine residue of GlnA, thus reducing its activity. Conversely, when nitrogen levels are low, the N-terminal adenylyl removase (AR) activates GlnA by removing the adenylyl group by phosphorolysis, increasing its activity. The regulatory region of GlnE binds the signal transduction protein PII (GlnB) which indicates the nitrogen status of the cell. The chain is Bifunctional glutamine synthetase adenylyltransferase/adenylyl-removing enzyme from Bifidobacterium longum subsp. infantis (strain ATCC 15697 / DSM 20088 / JCM 1222 / NCTC 11817 / S12).